The chain runs to 111 residues: UPF0060 membrane protein Ajs_1473 (111 aa).

Transmembrane regions (helical) follow at residues 8 to 28 (ILFA…WLVV), 33 to 53 (SAWL…LLTL), 65 to 85 (YGGM…GVAL), and 88 to 108 (WDFV…LQPA).

The protein belongs to the UPF0060 family.

Its subcellular location is the cell inner membrane. This Acidovorax sp. (strain JS42) protein is UPF0060 membrane protein Ajs_1473.